A 263-amino-acid chain; its full sequence is Probable endonuclease lcl3 (263 aa).

A disordered region spans residues 1 to 21; the sequence is MGWLDFSSKSKKEEKDDTRPS. The span at 8–19 shows a compositional bias: basic and acidic residues; the sequence is SKSKKEEKDDTR. The chain crosses the membrane as a helical span at residues 41–59; it reads TVIPTILLTTTILVSTRLY. Residues 80–240 form the TNase-like domain; that stretch reads RSLFGTVTRV…KKKKLGMWSG (161 aa). Residue arginine 131 is part of the active site. Aspartate 136 serves as a coordination point for Ca(2+). Active-site residues include glutamate 139 and arginine 179. Residues 236-263 form a disordered region; the sequence is GMWSGKKKDYESPRDYKTRTANAAKMLK. Residues 241 to 253 show a composition bias toward basic and acidic residues; it reads KKKDYESPRDYKT.

The protein belongs to the LCL3 family.

The protein resides in the mitochondrion. It is found in the membrane. The protein is Probable endonuclease lcl3 (lcl3) of Botryotinia fuckeliana (strain B05.10) (Noble rot fungus).